A 667-amino-acid polypeptide reads, in one-letter code: MAKFNLKSNYQPRGDQPQAIEELSTGLQRGDKHQVLLGVTGSGKTFTMANVVAQVQRPTLVLAHNKTLAAQLYGEFKELFPDNAVEYFVSYYDYYQPEAYVPTTDTFIEKDSSINEEIDKMRHSATRSLLSRNDVLIVSSVSCIYGLGSPEAYYGMLIRLETGMQLDRNALLKNLVEIQYDRNDVDFHRGTFRVRGDTVEIFPAYEEKRALRIEFFGDEIDAICEIDPLRGKVLDRLERTAVFPASHYVATRPTLDRAIREIQDELRERLTWFRENNMLLEAQRIEQRTMFDIEMIEEMGYCQGIENYSRFLDGRQAGQPPATLFDYFPDDALLFIDESHVTVSQIGAMYRGDRSRKETLVRYGFRMPSALDNRPLTFEEFEAKGIQTIYVSATPADYELRKADGVVVEQIIRPTGLLDPPIDVRPAKDQVDDLIHEIRLTIKQNERVLVTTLTKRMAEELTGYLGELGIKVRYLHSDIDTVERMQILRELREGLFDVLVGINLLREGLDIPEVSLVAILDADKEGFLRSERSLIQTCGRAARNVAGRVIMYADRITRSMRACLDETERRRTAQLAYNEEHGITPQTVKKSLRSILEDIAEKDYVELPQVAEELGDYHTPQDVKNEIARVKEEMLAAAANLEFEKAAELRDRMLELDKLELSIRNVK.

Positions 25–414 constitute a Helicase ATP-binding domain; it reads TGLQRGDKHQ…GVVVEQIIRP (390 aa). Position 38-45 (38-45) interacts with ATP; it reads GVTGSGKT. The Beta-hairpin motif lies at 91-114; the sequence is YYDYYQPEAYVPTTDTFIEKDSSI. One can recognise a Helicase C-terminal domain in the interval 430–596; sequence QVDDLIHEIR…TVKKSLRSIL (167 aa). The UVR domain occupies 624-659; the sequence is KNEIARVKEEMLAAAANLEFEKAAELRDRMLELDKL.

Belongs to the UvrB family. As to quaternary structure, forms a heterotetramer with UvrA during the search for lesions. Interacts with UvrC in an incision complex.

Its subcellular location is the cytoplasm. The UvrABC repair system catalyzes the recognition and processing of DNA lesions. A damage recognition complex composed of 2 UvrA and 2 UvrB subunits scans DNA for abnormalities. Upon binding of the UvrA(2)B(2) complex to a putative damaged site, the DNA wraps around one UvrB monomer. DNA wrap is dependent on ATP binding by UvrB and probably causes local melting of the DNA helix, facilitating insertion of UvrB beta-hairpin between the DNA strands. Then UvrB probes one DNA strand for the presence of a lesion. If a lesion is found the UvrA subunits dissociate and the UvrB-DNA preincision complex is formed. This complex is subsequently bound by UvrC and the second UvrB is released. If no lesion is found, the DNA wraps around the other UvrB subunit that will check the other stand for damage. The protein is UvrABC system protein B of Syntrophotalea carbinolica (strain DSM 2380 / NBRC 103641 / GraBd1) (Pelobacter carbinolicus).